Here is a 32-residue protein sequence, read N- to C-terminus: Ranatuerin-2Lb (32 aa).

Residues C27 and C32 are joined by a disulfide bond.

In terms of tissue distribution, expressed by the skin glands.

It localises to the secreted. In terms of biological role, antibacterial activity against Gram-positive bacterium S.aureus and Gram-negative bacterium E.coli. Has activity against C.albicans. This chain is Ranatuerin-2Lb, found in Rana luteiventris (Columbia spotted frog).